A 106-amino-acid polypeptide reads, in one-letter code: MAKIKKGDQVIVIAGKEKGKQGTVLSVSEDRVKVEGLNLVKKHQKPNRVTGAEGGIVTQEASLHISNVAVFNATTQKADRVGYQVDENGAKTRVYKSNGESVAVAK.

This sequence belongs to the universal ribosomal protein uL24 family. In terms of assembly, part of the 50S ribosomal subunit.

Functionally, one of two assembly initiator proteins, it binds directly to the 5'-end of the 23S rRNA, where it nucleates assembly of the 50S subunit. Its function is as follows. One of the proteins that surrounds the polypeptide exit tunnel on the outside of the subunit. This Acinetobacter baylyi (strain ATCC 33305 / BD413 / ADP1) protein is Large ribosomal subunit protein uL24.